A 208-amino-acid chain; its full sequence is dTTP/UTP pyrophosphatase (208 aa).

Aspartate 79 functions as the Proton acceptor in the catalytic mechanism.

Belongs to the Maf family. YhdE subfamily. Requires a divalent metal cation as cofactor.

The protein resides in the cytoplasm. It catalyses the reaction dTTP + H2O = dTMP + diphosphate + H(+). The catalysed reaction is UTP + H2O = UMP + diphosphate + H(+). Functionally, nucleoside triphosphate pyrophosphatase that hydrolyzes dTTP and UTP. May have a dual role in cell division arrest and in preventing the incorporation of modified nucleotides into cellular nucleic acids. The protein is dTTP/UTP pyrophosphatase of Mesorhizobium japonicum (strain LMG 29417 / CECT 9101 / MAFF 303099) (Mesorhizobium loti (strain MAFF 303099)).